The primary structure comprises 105 residues: Fe-S protein maturation auxiliary factor PG_1777 (105 aa).

It belongs to the Fe-S cluster assembly domain superfamily. MIP18-like family. Putative homodimer; may be disulfide-linked.

Iron binding protein that protects DNA from Fenton chemistry-mediated damage caused by hydrogen peroxide induced oxidative stress. May be involved in iron-sulfur cluster assembly. In Porphyromonas gingivalis (strain ATCC BAA-308 / W83), this protein is Fe-S protein maturation auxiliary factor PG_1777.